The primary structure comprises 448 residues: Phosphoglucosamine mutase (448 aa).

Serine 89 functions as the Phosphoserine intermediate in the catalytic mechanism. Positions 89, 232, 234, and 236 each coordinate Mg(2+). Serine 89 carries the post-translational modification Phosphoserine.

This sequence belongs to the phosphohexose mutase family. In terms of assembly, forms large aggregates. The cofactor is Mg(2+). In terms of processing, activated by phosphorylation.

The enzyme catalyses alpha-D-glucosamine 1-phosphate = D-glucosamine 6-phosphate. Functionally, catalyzes the conversion of glucosamine-6-phosphate to glucosamine-1-phosphate. The sequence is that of Phosphoglucosamine mutase (glmM) from Methanocaldococcus jannaschii (strain ATCC 43067 / DSM 2661 / JAL-1 / JCM 10045 / NBRC 100440) (Methanococcus jannaschii).